The sequence spans 234 residues: Endonuclease V (234 aa).

The Mg(2+) site is built by D36 and D104.

Belongs to the endonuclease V family. Requires Mg(2+) as cofactor.

The protein localises to the cytoplasm. The enzyme catalyses Endonucleolytic cleavage at apurinic or apyrimidinic sites to products with a 5'-phosphate.. Functionally, DNA repair enzyme involved in the repair of deaminated bases. Selectively cleaves double-stranded DNA at the second phosphodiester bond 3' to a deoxyinosine leaving behind the intact lesion on the nicked DNA. In Yersinia pseudotuberculosis serotype O:1b (strain IP 31758), this protein is Endonuclease V.